The following is a 323-amino-acid chain: uncharacterized protein (323 aa).

2 disordered regions span residues 185–214 (AELM…GSSW) and 271–294 (GNII…YEKL).

Belongs to the IGBP1/TAP42 family.

This is an uncharacterized protein from Schizosaccharomyces pombe (strain 972 / ATCC 24843) (Fission yeast).